The sequence spans 367 residues: Quinolinate synthase (367 aa).

Iminosuccinate contacts are provided by H45 and S62. Residue C109 coordinates [4Fe-4S] cluster. Iminosuccinate-binding positions include Y140–N142 and S161. C229 provides a ligand contact to [4Fe-4S] cluster. Iminosuccinate-binding positions include H255–E257 and T272. C319 lines the [4Fe-4S] cluster pocket.

It belongs to the quinolinate synthase family. Type 3 subfamily. [4Fe-4S] cluster serves as cofactor.

It is found in the cytoplasm. The catalysed reaction is iminosuccinate + dihydroxyacetone phosphate = quinolinate + phosphate + 2 H2O + H(+). It participates in cofactor biosynthesis; NAD(+) biosynthesis; quinolinate from iminoaspartate: step 1/1. Catalyzes the condensation of iminoaspartate with dihydroxyacetone phosphate to form quinolinate. The polypeptide is Quinolinate synthase (Halalkalibacterium halodurans (strain ATCC BAA-125 / DSM 18197 / FERM 7344 / JCM 9153 / C-125) (Bacillus halodurans)).